We begin with the raw amino-acid sequence, 254 residues long: Enolase-phosphatase E1 (254 aa).

Asp-13 and Glu-15 together coordinate Mg(2+). Substrate contacts are provided by residues 127–128 (SS) and Lys-173. Asp-200 provides a ligand contact to Mg(2+).

Belongs to the HAD-like hydrolase superfamily. MasA/MtnC family. In terms of assembly, monomer. Requires Mg(2+) as cofactor.

It is found in the cytoplasm. Its subcellular location is the nucleus. It carries out the reaction 5-methylsulfanyl-2,3-dioxopentyl phosphate + H2O = 1,2-dihydroxy-5-(methylsulfanyl)pent-1-en-3-one + phosphate. It participates in amino-acid biosynthesis; L-methionine biosynthesis via salvage pathway; L-methionine from S-methyl-5-thio-alpha-D-ribose 1-phosphate: step 3/6. Its pathway is amino-acid biosynthesis; L-methionine biosynthesis via salvage pathway; L-methionine from S-methyl-5-thio-alpha-D-ribose 1-phosphate: step 4/6. Its function is as follows. Bifunctional enzyme that catalyzes the enolization of 2,3-diketo-5-methylthiopentyl-1-phosphate (DK-MTP-1-P) into the intermediate 2-hydroxy-3-keto-5-methylthiopentenyl-1-phosphate (HK-MTPenyl-1-P), which is then dephosphorylated to form the acireductone 1,2-dihydroxy-3-keto-5-methylthiopentene (DHK-MTPene). The polypeptide is Enolase-phosphatase E1 (utr4) (Sclerotinia sclerotiorum (strain ATCC 18683 / 1980 / Ss-1) (White mold)).